Reading from the N-terminus, the 700-residue chain is Methionine--tRNA ligase (700 aa).

The short motif at 14 to 24 is the 'HIGH' region element; the sequence is PYANGPVHLGH. Positions 146, 149, 159, and 162 each coordinate Zn(2+). Positions 343 to 347 match the 'KMSKS' region motif; the sequence is KFSKS. Residue K346 coordinates ATP. One can recognise a tRNA-binding domain in the interval 599 to 700; it reads EFEKIDLRVA…GDSIVGKPVK (102 aa).

It belongs to the class-I aminoacyl-tRNA synthetase family. MetG type 1 subfamily. In terms of assembly, homodimer. The cofactor is Zn(2+).

Its subcellular location is the cytoplasm. The catalysed reaction is tRNA(Met) + L-methionine + ATP = L-methionyl-tRNA(Met) + AMP + diphosphate. Is required not only for elongation of protein synthesis but also for the initiation of all mRNA translation through initiator tRNA(fMet) aminoacylation. This is Methionine--tRNA ligase from Chloroherpeton thalassium (strain ATCC 35110 / GB-78).